A 1473-amino-acid chain; its full sequence is MATKLPLQNSNAANVAKAPAKSRAAAGGKTIEEMYQKKSQLEHILLRPDTYIGSIEKHTQTLWVYEKDEMVQRPVTYVPGLYKIFDEILVNAADNKQRDAKMDSVQVVIDVEQNLISVCNSGAGVPVEIHQEEGIYVPEMIFGHLLTSSNYDDNVKKTTGGRNGYGAKLTNIFSTEFIIETADGKRLKKYKQVFENNMGKKSEPVITKCNKSENWTKVTFKPDLKKFNMTELEDDVVALMSKRVFDIAGCLGKSVKVELNGKQIPVKSFTDYVDLYLSAANKSRTEDPLPRLTEKVNDRWEVCVSLSEGQFQQVSFVNSIATIKGGTHVDYVTSQITNHIVAAVNKKNKNANVKAHNVKNHLWVFVNALIDNPAFDSQTKETLTLRQSSFGSKCELSEDFLKKVGKSGVVENLLSWADFKQNKDLKKSDGAKTGRVLVEKLDDAAEAGGKNSRLCTLILTEGDSAKSLALAGRSVLGNNYCGVFPLRGKLLNVREASTTQITNNKEIENLKKILGLKQNMKYENVNSLRYGQMMIMTDQDHDGSHIKGLLINFIHSFWPSLLQVPSFLVEFITPIVKATRKGTKKVLSFYSMPEYEEWKESLKGNATGWDIKYYKGLGTSTAEEGKEYFSNLGLHKKDFVWEDEQDGEAIELAFSKKKIEARKNWLSSYVPGNHLDQRQPKVTYSDFVNKELILFSMADLQRSIPSMVDGLKPGQRKILFVAFKKIARKEMKVAQLVGYVSLLSAYHHGEQSLASAIIGMAQDYVGSNNINLLLPNGQFGTRTSGGKDSASARYIFTKLSPVTRILFPKDDDLLLDYLNEDGQRIEPTWYMPIIPTVLVNGAEGIGTGWSTFIPNYNPREIVANVRRLLNGESMVPMDPWYRGFKGTIEKTASKEGGCTYTITGLYEEVDETTIRITELPIRRWNDDYKNFLQSLKTDNGAPFFQDVKAYNDEKSVDFDLILSEENMLAARQEGFLKKFKLTTTIATSNMHLFDKKGVIKKYVTPEQILEEFFDLRFEYYEKRKETVVKNMEIELLKLENKARFILAVLSGEIIVNKRKKADIVEDLRQKGFTPFPRKAESVEAAIAGAVDDDAAEEPEEILVDPESSSSYIPGSEYDYLLAMAIASLTIEKVEELLADRDKMIIAVADMKKTTPKSLWLSDLESLDKELEKLDLKDAQVQQAIEAAQKKIRAKSGAAVKVKRQAPKKPAPKKTTKKASESETTEASYSAMDTDNNVAEVVKPKARQGAKKKASESETTEASHSAMDTDNNVAEVVKPKGRQGAKKKAPAAAKEVEEDEMLDLAQRLAQYNFGSAPADSSKTAETSKAIAVDDDDDDVVVEVAPVKKGGRKPAATKAAKPPAAPRKRGKQTVASTEVLAIGVSPEKKVRKMRSSPFNKKSSSVMSRLADNKEEESSENVAGNSSSEKSGGDVSAISRPQRANRRKMTYVLSDSESESANDSEFDDIEDDEDDE.

The disordered stretch occupies residues 1 to 20 (MATKLPLQNSNAANVAKAPA). The span at 9-20 (NSNAANVAKAPA) shows a compositional bias: low complexity. ATP contacts are provided by residues N91, N120, 148-150 (SSN), and 161-168 (GRNGYGAK). Residues 345–347 (NKK) are interaction with DNA. 378–380 (QTK) is a binding site for ATP. One can recognise a Toprim domain in the interval 455–569 (CTLILTEGDS…SLLQVPSFLV (115 aa)). Positions 461, 538, and 540 each coordinate Mg(2+). Positions 704-1163 (IPSMVDGLKP…TPKSLWLSDL (460 aa)) constitute a Topo IIA-type catalytic domain. The active-site O-(5'-phospho-DNA)-tyrosine intermediate is Y794. An interaction with DNA region spans residues 980 to 989 (KLTTTIATSN). Disordered regions lie at residues 1195 to 1230 (SGAA…SYSA), 1242 to 1297 (KPKA…EVEE), and 1313 to 1473 (GSAP…EDDE). Composition is skewed to basic residues over residues 1200–1216 (KVKR…KTTK) and 1278–1288 (PKGRQGAKKKA). Residues 1351-1360 (KPAATKAAKP) show a composition bias toward low complexity. 2 stretches are compositionally biased toward polar residues: residues 1394 to 1404 (SPFNKKSSSVM) and 1417 to 1427 (ENVAGNSSSEK). The span at 1453-1473 (SESESANDSEFDDIEDDEDDE) shows a compositional bias: acidic residues.

This sequence belongs to the type II topoisomerase family. As to quaternary structure, homodimer. Mg(2+) is required as a cofactor. The cofactor is Mn(2+). Requires Ca(2+) as cofactor.

The catalysed reaction is ATP-dependent breakage, passage and rejoining of double-stranded DNA.. Its function is as follows. Control of topological states of DNA by transient breakage and subsequent rejoining of DNA strands. Topoisomerase II makes double-strand breaks. The sequence is that of DNA topoisomerase 2 (TOP2) from Arabidopsis thaliana (Mouse-ear cress).